Here is a 247-residue protein sequence, read N- to C-terminus: Probable transcriptional regulatory protein lpl1249 (247 aa).

This sequence belongs to the TACO1 family.

It localises to the cytoplasm. The protein is Probable transcriptional regulatory protein lpl1249 of Legionella pneumophila (strain Lens).